The following is a 393-amino-acid chain: Protein FAM47E (393 aa).

Residues 326–354 (VSHKAQEENFKKELQEQEELLADLHGTVA) adopt a coiled-coil conformation.

The protein belongs to the FAM47 family. As to quaternary structure, interacts with PRMT5; the interaction is direct. Interacts with WDR77.

It is found in the nucleus. It localises to the chromosome. The protein localises to the cytoplasm. Functionally, promotes histone methylation by localizing the arginine methyltransferase PRMT5 to chromatin. The chain is Protein FAM47E (FAM47E) from Homo sapiens (Human).